The sequence spans 829 residues: Trimethylamine-N-oxide reductase (829 aa).

The segment at residues 1 to 31 (MNRRDFLKGIASSSFVVLGGSSVLTPLNALA) is a signal peptide (tat-type signal). A Mo-bis(molybdopterin guanine dinucleotide)-binding site is contributed by Ser-180.

It belongs to the prokaryotic molybdopterin-containing oxidoreductase family. Requires Mo-bis(molybdopterin guanine dinucleotide) as cofactor. Predicted to be exported by the Tat system. The position of the signal peptide cleavage has been experimentally proven.

It localises to the periplasm. It catalyses the reaction trimethylamine + 2 Fe(III)-[cytochrome c] + H2O = trimethylamine N-oxide + 2 Fe(II)-[cytochrome c] + 3 H(+). In terms of biological role, reduces trimethylamine-N-oxide (TMAO) into trimethylamine; an anaerobic reaction coupled to energy-yielding reactions. The polypeptide is Trimethylamine-N-oxide reductase (torA) (Shewanella massilia).